A 529-amino-acid chain; its full sequence is Peptide chain release factor 3 (529 aa).

The tr-type G domain maps to 11–280 (AARRTFAIIS…GLVAWAPPPM (270 aa)). Residues 20–27 (SHPDAGKT), 88–92 (DTPGH), and 142–145 (NKVD) contribute to the GTP site.

It belongs to the TRAFAC class translation factor GTPase superfamily. Classic translation factor GTPase family. PrfC subfamily.

The protein localises to the cytoplasm. Increases the formation of ribosomal termination complexes and stimulates activities of RF-1 and RF-2. It binds guanine nucleotides and has strong preference for UGA stop codons. It may interact directly with the ribosome. The stimulation of RF-1 and RF-2 is significantly reduced by GTP and GDP, but not by GMP. This Sodalis glossinidius (strain morsitans) protein is Peptide chain release factor 3.